The following is a 463-amino-acid chain: tRNA dimethylallyltransferase 9 (463 aa).

57-64 (GPTGAGKS) serves as a coordination point for ATP. 59–64 (TGAGKS) provides a ligand contact to substrate. The interaction with substrate tRNA stretch occupies residues 82-85 (DSVQ).

This sequence belongs to the IPP transferase family. It depends on Mg(2+) as a cofactor. Expressed ubiquitously, with highest expression in proliferating tissues.

It is found in the cytoplasm. It carries out the reaction adenosine(37) in tRNA + dimethylallyl diphosphate = N(6)-dimethylallyladenosine(37) in tRNA + diphosphate. Its function is as follows. Catalyzes the transfer of a dimethylallyl group onto the adenine at position 37 in tRNAs that read codons beginning with uridine, leading to the formation of N6-(dimethylallyl)adenosine (i(6)A). Involved in the cis-type cytokinin biosynthesis. This chain is tRNA dimethylallyltransferase 9 (IPT9), found in Arabidopsis thaliana (Mouse-ear cress).